The sequence spans 532 residues: Bone morphogenetic protein receptor type-1A (532 aa).

Positions 1 to 23 (MPQLYIYIRLLGAYLFIISRVQG) are cleaved as a signal peptide. Topologically, residues 24 to 152 (QNLDSMLHGT…IGPFFDGSIR (129 aa)) are extracellular. 3 cysteine pairs are disulfide-bonded: Cys-61–Cys-82, Cys-63–Cys-67, and Cys-76–Cys-100. An N-linked (GlcNAc...) asparagine glycan is attached at Asn-73. A mediates specificity for BMP ligand region spans residues 107–109 (DFQ). 2 disulfides stabilise this stretch: Cys-110–Cys-124 and Cys-125–Cys-130. The helical transmembrane segment at 153–176 (WLVLLISMAVCIIAMIIFSSCFCY) threads the bilayer. The Cytoplasmic portion of the chain corresponds to 177–532 (KHYCKSISSR…KMVESQDVKI (356 aa)). Positions 204–233 (ESLKDLIDQSQSSGSGSGLPLLVQRTIAKQ) constitute a GS domain. Positions 234–525 (IQMVRQVGKG…RIKKTLAKMV (292 aa)) constitute a Protein kinase domain. Residues 240-248 (VGKGRYGEV) and Lys-261 each bind ATP. The active-site Proton acceptor is Asp-362.

Belongs to the protein kinase superfamily. TKL Ser/Thr protein kinase family. TGFB receptor subfamily. In terms of assembly, interacts with low affinity with GDF5; positively regulates chondrocyte differentiation. Interacts with BMP4. Interacts with SCUBE3. Interacts with TSC22D1/TSC-22. Interacts with BMP2; the interaction may induce HAMP expression. Interacts with BMP6. Interacts with heterodimers composed of BMP2 and BMP6 in vitro; the interaction may induce HAMP expression. Interacts with TGFBR3. The cofactor is Mg(2+). Mn(2+) is required as a cofactor. Post-translationally, glycosylated. Highly expressed in skeletal muscle.

Its subcellular location is the cell membrane. The protein localises to the cell surface. It catalyses the reaction L-threonyl-[receptor-protein] + ATP = O-phospho-L-threonyl-[receptor-protein] + ADP + H(+). The enzyme catalyses L-seryl-[receptor-protein] + ATP = O-phospho-L-seryl-[receptor-protein] + ADP + H(+). On ligand binding, forms a receptor complex consisting of two type II and two type I transmembrane serine/threonine kinases. Type II receptors phosphorylate and activate type I receptors which autophosphorylate, then bind and activate SMAD transcriptional regulators. Receptor for BMP2, BMP4, GDF5 and GDF6. Positively regulates chondrocyte differentiation through GDF5 interaction. Mediates induction of adipogenesis by GDF6. May promote the expression of HAMP, potentially via its interaction with BMP2. In Homo sapiens (Human), this protein is Bone morphogenetic protein receptor type-1A (BMPR1A).